Reading from the N-terminus, the 371-residue chain is Alanine dehydrogenase (371 aa).

Residues Arg-15 and Lys-74 each coordinate substrate. The active-site Proton donor/acceptor is the His-95. NAD(+) is bound by residues Ser-133, 177-178 (QA), Asp-197, Ser-219, 238-239 (VL), 266-269 (IAID), Arg-279, and 298-301 (VANM). Asp-269 functions as the Proton donor/acceptor in the catalytic mechanism.

It belongs to the AlaDH/PNT family. Homohexamer. Trimer of dimer.

It catalyses the reaction L-alanine + NAD(+) + H2O = pyruvate + NH4(+) + NADH + H(+). Its pathway is amino-acid degradation; L-alanine degradation via dehydrogenase pathway; NH(3) and pyruvate from L-alanine: step 1/1. Its function is as follows. Catalyzes the reversible reductive amination of pyruvate to L-alanine. May play a role in cell wall synthesis as L-alanine is an important constituent of the peptidoglycan layer. This is Alanine dehydrogenase (ald) from Staphylococcus saprophyticus subsp. saprophyticus (strain ATCC 15305 / DSM 20229 / NCIMB 8711 / NCTC 7292 / S-41).